Consider the following 152-residue polypeptide: ATP synthase epsilon chain 2 (152 aa).

It belongs to the ATPase epsilon chain family. F-type ATPases have 2 components, CF(1) - the catalytic core - and CF(0) - the membrane proton channel. CF(1) has five subunits: alpha(3), beta(3), gamma(1), delta(1), epsilon(1). CF(0) has three main subunits: a, b and c.

The protein localises to the cell inner membrane. Functionally, produces ATP from ADP in the presence of a proton gradient across the membrane. The polypeptide is ATP synthase epsilon chain 2 (Burkholderia orbicola (strain AU 1054)).